Here is a 428-residue protein sequence, read N- to C-terminus: Serine--tRNA ligase (428 aa).

231–233 is an L-serine binding site; that stretch reads TAE. Residues 262–264 and valine 278 each bind ATP; that span reads RRE. Glutamate 285 is an L-serine binding site. 349–352 serves as a coordination point for ATP; the sequence is EVSS. L-serine is bound at residue serine 384.

This sequence belongs to the class-II aminoacyl-tRNA synthetase family. Type-1 seryl-tRNA synthetase subfamily. As to quaternary structure, homodimer. The tRNA molecule binds across the dimer.

The protein localises to the cytoplasm. It catalyses the reaction tRNA(Ser) + L-serine + ATP = L-seryl-tRNA(Ser) + AMP + diphosphate + H(+). The catalysed reaction is tRNA(Sec) + L-serine + ATP = L-seryl-tRNA(Sec) + AMP + diphosphate + H(+). It participates in aminoacyl-tRNA biosynthesis; selenocysteinyl-tRNA(Sec) biosynthesis; L-seryl-tRNA(Sec) from L-serine and tRNA(Sec): step 1/1. Catalyzes the attachment of serine to tRNA(Ser). Is also able to aminoacylate tRNA(Sec) with serine, to form the misacylated tRNA L-seryl-tRNA(Sec), which will be further converted into selenocysteinyl-tRNA(Sec). The polypeptide is Serine--tRNA ligase (Chlamydia muridarum (strain MoPn / Nigg)).